The sequence spans 640 residues: Zinc finger protein 549 (640 aa).

The KRAB domain maps to 27 to 140; the sequence is VTFEDIAVYF…PYTSVASGKW (114 aa). The C2H2-type 1; degenerate zinc-finger motif lies at 217-241; the sequence is FQQRRYKCEQVFNEKVHVTEHQRVH. A Glycyl lysine isopeptide (Lys-Gly) (interchain with G-Cter in SUMO2) cross-link involves residue Lys-223. The C2H2-type 2; degenerate zinc finger occupies 247–269; it reads YKRREYGKSLNSKYLFVEHQRTH. 13 consecutive C2H2-type zinc fingers follow at residues 275–298, 304–326, 332–355, 361–383, 389–411, 417–439, 445–467, 473–495, 501–523, 529–551, 557–579, 585–607, and 613–635; these read YVCNICGKSFLHKQTLVGHQQRIH, YVCIECGKSLSSKYSLVEHQRTH, YVCNVCGKSFRHKQTFVGHQQRIH, YVCMECGKSFIHSYDRIRHQRVH, YQCSECGKSFIYKQSLLDHHRIH, YECKECGKAFIHKKRLLEHQRIH, YVCIICGKSFIRSSDYMRHQRIH, YECSDCGKAFISKQTLLKHHKIH, YECSECGKGFYLEVKLLQHQRIH, CECNECGKVFSHQKRLLEHQKVH, CECSECGKCFRHRTSLIQHQKVH, YNCTACEKAFIYKNKLVEHQRIH, and YECGKCGKAFNKRYSLVRHQKVH.

The protein belongs to the krueppel C2H2-type zinc-finger protein family.

The protein localises to the nucleus. Functionally, may be involved in transcriptional regulation. The chain is Zinc finger protein 549 (ZNF549) from Homo sapiens (Human).